The following is a 241-amino-acid chain: Small ribosomal subunit protein bS6 (241 aa).

A compositionally biased stretch (basic residues) spans 97-108 (KPKIRERNRKYT). The disordered stretch occupies residues 97–241 (KPKIRERNRK…YNNKKPQSSN (145 aa)). Positions 109–118 (LRRDRFDKPN) are enriched in basic and acidic residues. Low complexity-rich tracts occupy residues 130–151 (QDQQ…QASQ) and 161–182 (DDFQ…NQSG). The span at 183–193 (YHRENNRHNQE) shows a compositional bias: basic and acidic residues. Over residues 194-210 (NMHQNNKNHQNQTSQTQ) the composition is skewed to low complexity.

It belongs to the bacterial ribosomal protein bS6 family.

Binds together with bS18 to 16S ribosomal RNA. This Mesomycoplasma hyopneumoniae (strain J / ATCC 25934 / NCTC 10110) (Mycoplasma hyopneumoniae) protein is Small ribosomal subunit protein bS6.